A 280-amino-acid polypeptide reads, in one-letter code: Tumor necrosis factor ligand superfamily member 6 (280 aa).

At 1-80 (MQQPFNYPYP…KKRGNHSTGL (80 aa)) the chain is on the cytoplasmic side. A disordered region spans residues 20–70 (SSPWAPPGTVLPCPTSVPRRPGQRRPPPPPPPPPLPPPPPSPLPPLPLPPL). The span at 43–69 (RRPPPPPPPPPLPPPPPSPLPPLPLPP) shows a compositional bias: pro residues. The chain crosses the membrane as a helical; Signal-anchor for type II membrane protein span at residues 81–101 (CLLVMFFMVLVALVGLGLGMF). Residues 102 to 280 (QLFHLQKELA…SQTFFGLYKL (179 aa)) are Extracellular-facing. The tract at residues 117–155 (TSQKHTASSLEKQIGHPSPPPEKKEQRKVAHLTGKPNSR) is disordered. One can recognise a THD domain in the interval 144–280 (KVAHLTGKPN…SQTFFGLYKL (137 aa)). Residue N183 is glycosylated (N-linked (GlcNAc...) asparagine). A disulfide bond links C201 and C232. 2 N-linked (GlcNAc...) asparagine glycosylation sites follow: N249 and N259.

This sequence belongs to the tumor necrosis factor family. In terms of assembly, homotrimer. Interacts with ARHGAP9, BAIAP2L1, BTK, CACNB3, CACNB4, CRK, DLG2, DNMBP, DOCK4, EPS8L3, FGR, FYB1, FYN, HCK, ITK, ITSN2, KALRN, LYN, MACC1, MIA, MPP4, MYO15A, NCF1, NCK1, NCK2, NCKIPSD, OSTF1, PIK3R1, PSTPIP1, RIMBP3C, SAMSN1, SH3GL3, SH3PXD2B, SH3PXD2A, SH3RF2, SKAP2, SNX33, SNX9, SORBS3, SPTA1, SRC, SRGAP1, SRGAP2, SRGAP3, TEC, TJP3 and YES1. The soluble form derives from the membrane form by proteolytic processing. The membrane-bound form undergoes two successive intramembrane proteolytic cleavages. The first one is processed by ADAM10 producing an N-terminal fragment, which lacks the receptor-binding extracellular domain. This ADAM10-processed FasL (FasL APL) remnant form is still membrane anchored and further processed by SPPL2A that liberates the FasL intracellular domain (FasL ICD). FasL shedding by ADAM10 is a prerequisite for subsequent intramembrane cleavage by SPPL2A in T-cells. In terms of processing, phosphorylated by FGR on tyrosine residues; this is required for ubiquitination and subsequent internalization. Post-translationally, N-glycosylated. Glycosylation enhances apoptotic activity. Monoubiquitinated.

It is found in the cell membrane. The protein localises to the cytoplasmic vesicle lumen. Its subcellular location is the lysosome lumen. It localises to the secreted. The protein resides in the nucleus. Cytokine that binds to TNFRSF6/FAS, a receptor that transduces the apoptotic signal into cells. Involved in cytotoxic T-cell-mediated apoptosis, natural killer cell-mediated apoptosis and in T-cell development. Initiates fratricidal/suicidal activation-induced cell death (AICD) in antigen-activated T-cells contributing to the termination of immune responses. TNFRSF6/FAS-mediated apoptosis has also a role in the induction of peripheral tolerance. Binds to TNFRSF6B/DcR3, a decoy receptor that blocks apoptosis. Its function is as follows. Induces FAS-mediated activation of NF-kappa-B, initiating non-apoptotic signaling pathways. Can induce apoptosis but does not appear to be essential for this process. Functionally, cytoplasmic form induces gene transcription inhibition. The polypeptide is Tumor necrosis factor ligand superfamily member 6 (FASLG) (Macaca fascicularis (Crab-eating macaque)).